The primary structure comprises 259 residues: AM-toxin biosynthesis protein 11 (259 aa).

Residues 39–66 (RRSRRRPEEESIQSLSKHVSTTTQPCPT) are disordered. The segment covering 50–64 (IQSLSKHVSTTTQPC) has biased composition (polar residues).

It functions in the pathway mycotoxin biosynthesis. Its function is as follows. Part of the gene clusters that mediate the biosynthesis of AM-toxins, host-selective toxins (HSTs) causing Alternaria blotch on apple, a worldwide distributed disease. AM-toxins are cyclic depsipeptides containing the 3 residues 2-hydroxy-isovaleric acid (2-HIV), dehydroalanine, L-alanine which are common for all 3 AM-toxins I to III. The fourth precursor is L-alpha-amino-methoxyphenyl-valeric acid (L-Amv) for AM-toxin I, L-alpha-amino-phenyl-valeric acid (L-Apv) for AM-toxin II, and L-alpha-amino-hydroxyphenyl-valeric acid (L-Ahv) for AM-toxin III. AM-toxins have two target sites for affecting susceptible apple cells; they cause invagination of the plasma membrane and electrolyte loss and chloroplast disorganization. The non-ribosomal peptide synthetase AMT1 contains 4 catalytic modules and is responsible for activation of each residue in AM-toxin. The aldo-keto reductase AMT2 catalyzes the conversion of 2-keto-isovaleric acid (2-KIV) to 2-hydroxy-isovaleric acid (2-HIV), one of the precursor residues incorporated by AMT1 during AM-toxin biosynthesis, by reduction of its ketone to an alcohol. The cytochrome P450 monooxygenase AMT3 and the thioesterase AMT4 are also important for AM-toxin production, but their exact function within the AM-toxin biosynthesis are not known yet. Up to 21 proteins (including AMT1 to AMT4) are predicted to be involved in AM-toxin biosynthesis since their expression ishighly up-regulated in AM-toxin-producing cultures. This chain is AM-toxin biosynthesis protein 11, found in Alternaria alternata (Alternaria rot fungus).